The chain runs to 245 residues: Pathogenesis-related thaumatin-like protein 3.6 (245 aa).

Residues 1-19 (GSIPFWIALIASFSVFLQG) form the signal peptide. Cystine bridges form between Cys33/Cys226, Cys74/Cys84, Cys89/Cys95, Cys142/Cys215, Cys148/Cys198, Cys156/Cys166, Cys170/Cys179, and Cys180/Cys185. Residue Asn90 is glycosylated (N-linked (GlcNAc...) asparagine). A glycan (N-linked (GlcNAc...) asparagine) is linked at Asn186.

Belongs to the thaumatin family. Mostly expressed in strobili, and, to a lower extent, in roots of seedlings and saplings.

In terms of biological role, may be involved in disease resistance. This chain is Pathogenesis-related thaumatin-like protein 3.6, found in Cryptomeria japonica (Japanese cedar).